The following is a 215-amino-acid chain: Uridine kinase (215 aa).

Residue 16 to 23 (GASASGKS) participates in ATP binding.

It belongs to the uridine kinase family.

It localises to the cytoplasm. It catalyses the reaction uridine + ATP = UMP + ADP + H(+). The catalysed reaction is cytidine + ATP = CMP + ADP + H(+). It functions in the pathway pyrimidine metabolism; CTP biosynthesis via salvage pathway; CTP from cytidine: step 1/3. Its pathway is pyrimidine metabolism; UMP biosynthesis via salvage pathway; UMP from uridine: step 1/1. The chain is Uridine kinase from Aliivibrio salmonicida (strain LFI1238) (Vibrio salmonicida (strain LFI1238)).